The chain runs to 268 residues: Hemin import ATP-binding protein HmuV (268 aa).

The ABC transporter domain occupies 5–242 (IEARHLSKRA…ETIRDIFEID (238 aa)). 37 to 44 (GPNGAGKS) provides a ligand contact to ATP.

It belongs to the ABC transporter superfamily. Heme (hemin) importer (TC 3.A.1.14.5) family. As to quaternary structure, the complex is composed of two ATP-binding proteins (HmuV), two transmembrane proteins (HmuU) and a solute-binding protein (HmuT).

The protein localises to the cell inner membrane. Part of the ABC transporter complex HmuTUV involved in hemin import. Responsible for energy coupling to the transport system. This chain is Hemin import ATP-binding protein HmuV, found in Bradyrhizobium diazoefficiens (strain JCM 10833 / BCRC 13528 / IAM 13628 / NBRC 14792 / USDA 110).